The chain runs to 467 residues: Methylenetetrahydrofolate--tRNA-(uracil-5-)-methyltransferase TrmFO (467 aa).

11 to 16 (GAGLAG) contributes to the FAD binding site.

This sequence belongs to the MnmG family. TrmFO subfamily. The cofactor is FAD.

The protein resides in the cytoplasm. The catalysed reaction is uridine(54) in tRNA + (6R)-5,10-methylene-5,6,7,8-tetrahydrofolate + NADH + H(+) = 5-methyluridine(54) in tRNA + (6S)-5,6,7,8-tetrahydrofolate + NAD(+). The enzyme catalyses uridine(54) in tRNA + (6R)-5,10-methylene-5,6,7,8-tetrahydrofolate + NADPH + H(+) = 5-methyluridine(54) in tRNA + (6S)-5,6,7,8-tetrahydrofolate + NADP(+). Its function is as follows. Catalyzes the folate-dependent formation of 5-methyl-uridine at position 54 (M-5-U54) in all tRNAs. This is Methylenetetrahydrofolate--tRNA-(uracil-5-)-methyltransferase TrmFO from Prochlorococcus marinus (strain NATL1A).